We begin with the raw amino-acid sequence, 474 residues long: tRNA-2-methylthio-N(6)-dimethylallyladenosine synthase (474 aa).

One can recognise an MTTase N-terminal domain in the interval 3-120 (KKLHIKTWGC…LPDMIEQVRR (118 aa)). Residues Cys-12, Cys-49, Cys-83, Cys-157, Cys-161, and Cys-164 each contribute to the [4Fe-4S] cluster site. Residues 143-375 (RAEGPTAFVS…QDRITQQAMR (233 aa)) form the Radical SAM core domain. The region spanning 378-441 (RHMMGTVQRI…TNSLRGKFIR (64 aa)) is the TRAM domain.

This sequence belongs to the methylthiotransferase family. MiaB subfamily. Monomer. [4Fe-4S] cluster serves as cofactor.

The protein resides in the cytoplasm. The catalysed reaction is N(6)-dimethylallyladenosine(37) in tRNA + (sulfur carrier)-SH + AH2 + 2 S-adenosyl-L-methionine = 2-methylsulfanyl-N(6)-dimethylallyladenosine(37) in tRNA + (sulfur carrier)-H + 5'-deoxyadenosine + L-methionine + A + S-adenosyl-L-homocysteine + 2 H(+). In terms of biological role, catalyzes the methylthiolation of N6-(dimethylallyl)adenosine (i(6)A), leading to the formation of 2-methylthio-N6-(dimethylallyl)adenosine (ms(2)i(6)A) at position 37 in tRNAs that read codons beginning with uridine. This is tRNA-2-methylthio-N(6)-dimethylallyladenosine synthase from Shewanella putrefaciens (strain CN-32 / ATCC BAA-453).